The sequence spans 725 residues: Methionine--tRNA ligase (725 aa).

Positions 27-37 match the 'HIGH' region motif; that stretch reads PYANGQIHIGH. Cys-158, Cys-161, Cys-171, and Cys-174 together coordinate Zn(2+). A 'KMSKS' region motif is present at residues 348-352; sequence KMSKS. Lys-351 contacts ATP. One can recognise a tRNA-binding domain in the interval 619-725; that stretch reads DFAKIDLRIA…SGAKPGMRVK (107 aa).

Belongs to the class-I aminoacyl-tRNA synthetase family. MetG type 1 subfamily. As to quaternary structure, homodimer. It depends on Zn(2+) as a cofactor.

The protein resides in the cytoplasm. The catalysed reaction is tRNA(Met) + L-methionine + ATP = L-methionyl-tRNA(Met) + AMP + diphosphate. Is required not only for elongation of protein synthesis but also for the initiation of all mRNA translation through initiator tRNA(fMet) aminoacylation. In Burkholderia pseudomallei (strain 1710b), this protein is Methionine--tRNA ligase.